Consider the following 477-residue polypeptide: Endo-1,4-beta-xylanase A (477 aa).

Residues 1–41 (MGSYALPRSGVRRSIRVLLLALVVGVLGTATALIAPPGAHA) form the signal peptide. One can recognise a GH10 domain in the interval 42-340 (AESTLGAAAA…KAAYTAVLDA (299 aa)). The Proton donor role is filled by Glu169. Catalysis depends on Glu277, which acts as the Nucleophile. Residues 361 to 477 (SGRCLDVPDA…NGSNQRWTRT (117 aa)) form the Ricin B-type lectin domain. Intrachain disulfides connect Cys364/Cys383, Cys406/Cys423, and Cys447/Cys466.

This sequence belongs to the glycosyl hydrolase 10 (cellulase F) family.

It localises to the secreted. The enzyme catalyses Endohydrolysis of (1-&gt;4)-beta-D-xylosidic linkages in xylans.. It functions in the pathway glycan degradation; xylan degradation. Contributes to hydrolyze hemicellulose, the major component of plant cell-walls. XLNA and XLNB seem to act sequentially on the substrate to yield xylobiose and xylose as carbon sources. The sequence is that of Endo-1,4-beta-xylanase A (xlnA) from Streptomyces lividans.